Reading from the N-terminus, the 355-residue chain is Holliday junction branch migration complex subunit RuvB (355 aa).

The segment at 1–26 (MSIQTDDFASSSPAARRVVSTAPASP) is disordered. The tract at residues 5-196 (TDDFASSSPA…FGIVARLEFY (192 aa)) is large ATPase domain (RuvB-L). Over residues 9-22 (ASSSPAARRVVSTA) the composition is skewed to low complexity. Residues Leu35, Arg36, Gly77, Lys80, Thr81, Thr82, 143 to 145 (EDY), Arg186, Tyr196, and Arg233 contribute to the ATP site. A Mg(2+)-binding site is contributed by Thr81. Residues 197–267 (SVEELARIVT…IADKALAMLD (71 aa)) are small ATPAse domain (RuvB-S). Positions 270–355 (PQGFDVMDRK…TTSGSELFDA (86 aa)) are head domain (RuvB-H). Positions 325 and 330 each coordinate DNA.

It belongs to the RuvB family. Homohexamer. Forms an RuvA(8)-RuvB(12)-Holliday junction (HJ) complex. HJ DNA is sandwiched between 2 RuvA tetramers; dsDNA enters through RuvA and exits via RuvB. An RuvB hexamer assembles on each DNA strand where it exits the tetramer. Each RuvB hexamer is contacted by two RuvA subunits (via domain III) on 2 adjacent RuvB subunits; this complex drives branch migration. In the full resolvosome a probable DNA-RuvA(4)-RuvB(12)-RuvC(2) complex forms which resolves the HJ.

It localises to the cytoplasm. The enzyme catalyses ATP + H2O = ADP + phosphate + H(+). The RuvA-RuvB-RuvC complex processes Holliday junction (HJ) DNA during genetic recombination and DNA repair, while the RuvA-RuvB complex plays an important role in the rescue of blocked DNA replication forks via replication fork reversal (RFR). RuvA specifically binds to HJ cruciform DNA, conferring on it an open structure. The RuvB hexamer acts as an ATP-dependent pump, pulling dsDNA into and through the RuvAB complex. RuvB forms 2 homohexamers on either side of HJ DNA bound by 1 or 2 RuvA tetramers; 4 subunits per hexamer contact DNA at a time. Coordinated motions by a converter formed by DNA-disengaged RuvB subunits stimulates ATP hydrolysis and nucleotide exchange. Immobilization of the converter enables RuvB to convert the ATP-contained energy into a lever motion, pulling 2 nucleotides of DNA out of the RuvA tetramer per ATP hydrolyzed, thus driving DNA branch migration. The RuvB motors rotate together with the DNA substrate, which together with the progressing nucleotide cycle form the mechanistic basis for DNA recombination by continuous HJ branch migration. Branch migration allows RuvC to scan DNA until it finds its consensus sequence, where it cleaves and resolves cruciform DNA. This chain is Holliday junction branch migration complex subunit RuvB, found in Methylibium petroleiphilum (strain ATCC BAA-1232 / LMG 22953 / PM1).